The chain runs to 146 residues: Large ribosomal subunit protein uL15y (146 aa).

2 stretches are compositionally biased toward basic residues: residues 1–14 (MATALKKNRKKRGH) and 21–30 (RIGKHRKHPG). The interval 1–38 (MATALKKNRKKRGHVSAGHGRIGKHRKHPGGRGNAGGM) is disordered.

It belongs to the universal ribosomal protein uL15 family.

This chain is Large ribosomal subunit protein uL15y (RPL27AB), found in Arabidopsis thaliana (Mouse-ear cress).